Here is a 91-residue protein sequence, read N- to C-terminus: UPF0298 protein OB1449 (91 aa).

It belongs to the UPF0298 family.

It is found in the cytoplasm. This Oceanobacillus iheyensis (strain DSM 14371 / CIP 107618 / JCM 11309 / KCTC 3954 / HTE831) protein is UPF0298 protein OB1449.